The following is a 1050-amino-acid chain: Probable E3 ubiquitin-protein ligase HERC3 (1050 aa).

RCC1 repeat units follow at residues 1 to 51 (MLCW…FLLE), 52 to 101 (DGEV…ALSD), 102 to 154 (RGQL…ALAA), 156 to 207 (GQFF…ALSL), 208 to 259 (SGAV…VLTK), 261 to 311 (GGVF…AFVP), and 313 to 366 (SGLI…IVKQ). An HECT domain is found at 951-1050 (YKGDYSATHP…LDNYEGFSLA (100 aa)). Cys1018 (glycyl thioester intermediate) is an active-site residue.

Post-translationally, ubiquitinated; which promotes degradation by the proteasome.

It localises to the cytoplasm. It is found in the cytoplasmic vesicle. It catalyses the reaction S-ubiquitinyl-[E2 ubiquitin-conjugating enzyme]-L-cysteine + [acceptor protein]-L-lysine = [E2 ubiquitin-conjugating enzyme]-L-cysteine + N(6)-ubiquitinyl-[acceptor protein]-L-lysine.. The protein operates within protein modification; protein ubiquitination. In terms of biological role, E3 ubiquitin-protein ligase which accepts ubiquitin from an E2 ubiquitin-conjugating enzyme in the form of a thioester and then directly transfers the ubiquitin to targeted substrates. The sequence is that of Probable E3 ubiquitin-protein ligase HERC3 (HERC3) from Homo sapiens (Human).